Reading from the N-terminus, the 142-residue chain is Hemoglobin A subunit alpha-2 (142 aa).

The Globin domain maps to 2 to 142; sequence VLTAGDKANV…VAQNLTSKYR (141 aa). His59 serves as a coordination point for O2. His88 is a binding site for heme b.

It belongs to the globin family. In terms of assembly, tetramer of alpha-1, alpha-2 and two identical beta chains. Red blood cells.

In terms of biological role, involved in oxygen transport from the lung to the various peripheral tissues. The protein is Hemoglobin A subunit alpha-2 of Aldabrachelys gigantea (Aldabra giant tortoise).